Consider the following 449-residue polypeptide: Trigger factor (449 aa).

The PPIase FKBP-type domain occupies 169 to 254; that stretch reads GDRITVDFVG…AKQVEAPGEL (86 aa).

It belongs to the FKBP-type PPIase family. Tig subfamily.

The protein resides in the cytoplasm. It carries out the reaction [protein]-peptidylproline (omega=180) = [protein]-peptidylproline (omega=0). Its function is as follows. Involved in protein export. Acts as a chaperone by maintaining the newly synthesized protein in an open conformation. Functions as a peptidyl-prolyl cis-trans isomerase. The polypeptide is Trigger factor (Azorhizobium caulinodans (strain ATCC 43989 / DSM 5975 / JCM 20966 / LMG 6465 / NBRC 14845 / NCIMB 13405 / ORS 571)).